The primary structure comprises 344 residues: Protein RecA (344 aa).

Position 65-72 (65-72) interacts with ATP; sequence GPESSGKT.

It belongs to the RecA family.

The protein localises to the cytoplasm. Its function is as follows. Can catalyze the hydrolysis of ATP in the presence of single-stranded DNA, the ATP-dependent uptake of single-stranded DNA by duplex DNA, and the ATP-dependent hybridization of homologous single-stranded DNAs. It interacts with LexA causing its activation and leading to its autocatalytic cleavage. The polypeptide is Protein RecA (Rubrobacter xylanophilus (strain DSM 9941 / JCM 11954 / NBRC 16129 / PRD-1)).